The primary structure comprises 293 residues: tRNA pseudouridine synthase B (293 aa).

The active-site Nucleophile is the aspartate 40.

Belongs to the pseudouridine synthase TruB family. Type 1 subfamily.

It catalyses the reaction uridine(55) in tRNA = pseudouridine(55) in tRNA. Responsible for synthesis of pseudouridine from uracil-55 in the psi GC loop of transfer RNAs. This is tRNA pseudouridine synthase B from Mycolicibacterium paratuberculosis (strain ATCC BAA-968 / K-10) (Mycobacterium paratuberculosis).